The sequence spans 758 residues: 5-methyltetrahydropteroyltriglutamate--homocysteine methyltransferase (758 aa).

Residues 17 to 20 and K117 contribute to the 5-methyltetrahydropteroyltri-L-glutamate site; that span reads RELK. L-homocysteine contacts are provided by residues 434–436 and E487; that span reads IGS. L-methionine is bound by residues 434–436 and E487; that span reads IGS. 5-methyltetrahydropteroyltri-L-glutamate contacts are provided by residues 518–519 and W564; that span reads RC. An L-homocysteine-binding site is contributed by D602. D602 provides a ligand contact to L-methionine. Residue E608 participates in 5-methyltetrahydropteroyltri-L-glutamate binding. Zn(2+) contacts are provided by H644, C646, and E668. The active-site Proton donor is H697. Residue C729 coordinates Zn(2+).

It belongs to the vitamin-B12 independent methionine synthase family. Requires Zn(2+) as cofactor.

It catalyses the reaction 5-methyltetrahydropteroyltri-L-glutamate + L-homocysteine = tetrahydropteroyltri-L-glutamate + L-methionine. Its pathway is amino-acid biosynthesis; L-methionine biosynthesis via de novo pathway; L-methionine from L-homocysteine (MetE route): step 1/1. Catalyzes the transfer of a methyl group from 5-methyltetrahydrofolate to homocysteine resulting in methionine formation. The sequence is that of 5-methyltetrahydropteroyltriglutamate--homocysteine methyltransferase from Yersinia enterocolitica serotype O:8 / biotype 1B (strain NCTC 13174 / 8081).